Here is a 202-residue protein sequence, read N- to C-terminus: Pyrrolidone-carboxylate peptidase (202 aa).

Residues Glu-78, Cys-141, and His-165 contribute to the active site.

This sequence belongs to the peptidase C15 family. As to quaternary structure, homotetramer.

It localises to the cytoplasm. The enzyme catalyses Release of an N-terminal pyroglutamyl group from a polypeptide, the second amino acid generally not being Pro.. Its function is as follows. Removes 5-oxoproline from various penultimate amino acid residues except L-proline. In Thermosipho melanesiensis (strain DSM 12029 / CIP 104789 / BI429), this protein is Pyrrolidone-carboxylate peptidase.